A 586-amino-acid chain; its full sequence is MTQTTAPHAASNYLRNIIEDDLAANRFQGKRWAGKPGPASMQASGLPDPARIRTRFPPEPNGYLHIGHAKSICVNFGIAKEFGGVCHLRFDDTNPEKEDQEYVDAIIEAVRWLGFDWNTDGNNNLYFASDYFEFMYEFAEALIEAGHAFVDEQSADDIRAQRGTLTEPGRNSPFRDRPAAESLTRLREMRDGKHPDGSLVLRARIDMASPNINLRDPVMYRVRHAAHHRTGDKWCIYPMYSWAHPVEDALEGITHSICTLEFEDQRPFYDWILARLADLGKLARPLPRQYEFSRLNMSYIVTSKRKLLQLVREGYVDGWDDPRMPTLFGLRRRGYTASAIRLFCDRTAVSKSDSRIDYSLLEQAVRDDLDPGTTRSVAVLDPLKLVITNYPKDQTEVCKAPRNPHDPEAGQREFPFSRELWIERDDFREEAPKKYFRLFPGNLVRLKYGYVVRCTGFTKDEAGNITEVQAEYLPDTKSGTPGADSVKVKGNITWVSAAHAVPAEVRLYDRLFADPHPDGGDKDFLACLNPNSIQTVQAWLEPGTRAEPGATWQFERLGYFTVDSKDSSPEAPVLNRIVTLKDSWAA.

The 'HIGH' region motif lies at 58–68; it reads PEPNGYLHIGH. Residues 59-61 and 65-71 each bind ATP; these read EPN and HIGHAKS. L-glutamine is bound by residues D91 and Y240. ATP is bound by residues T259 and 294–295; that span reads RL. Positions 301 to 305 match the 'KMSKS' region motif; the sequence is VTSKR.

Belongs to the class-I aminoacyl-tRNA synthetase family. As to quaternary structure, monomer.

It localises to the cytoplasm. The enzyme catalyses tRNA(Gln) + L-glutamine + ATP = L-glutaminyl-tRNA(Gln) + AMP + diphosphate. The polypeptide is Glutamine--tRNA ligase (Bordetella avium (strain 197N)).